Here is a 186-residue protein sequence, read N- to C-terminus: Probable nicotinate-nucleotide adenylyltransferase (186 aa).

This sequence belongs to the NadD family.

It carries out the reaction nicotinate beta-D-ribonucleotide + ATP + H(+) = deamido-NAD(+) + diphosphate. It participates in cofactor biosynthesis; NAD(+) biosynthesis; deamido-NAD(+) from nicotinate D-ribonucleotide: step 1/1. Its function is as follows. Catalyzes the reversible adenylation of nicotinate mononucleotide (NaMN) to nicotinic acid adenine dinucleotide (NaAD). The sequence is that of Probable nicotinate-nucleotide adenylyltransferase from Thermus thermophilus (strain ATCC 27634 / DSM 579 / HB8).